We begin with the raw amino-acid sequence, 155 residues long: Small ribosomal subunit protein uS7cz/uS7cy (155 aa).

This sequence belongs to the universal ribosomal protein uS7 family. Part of the 30S ribosomal subunit.

It is found in the plastid. The protein localises to the chloroplast. Its function is as follows. One of the primary rRNA binding proteins, it binds directly to 16S rRNA where it nucleates assembly of the head domain of the 30S subunit. The polypeptide is Small ribosomal subunit protein uS7cz/uS7cy (rps7-A) (Psilotum nudum (Whisk fern)).